Reading from the N-terminus, the 573-residue chain is 2-succinyl-5-enolpyruvyl-6-hydroxy-3-cyclohexene-1-carboxylate synthase (573 aa).

Belongs to the TPP enzyme family. MenD subfamily. As to quaternary structure, homodimer. Requires Mg(2+) as cofactor. It depends on Mn(2+) as a cofactor. The cofactor is thiamine diphosphate.

It carries out the reaction isochorismate + 2-oxoglutarate + H(+) = 5-enolpyruvoyl-6-hydroxy-2-succinyl-cyclohex-3-ene-1-carboxylate + CO2. The protein operates within quinol/quinone metabolism; 1,4-dihydroxy-2-naphthoate biosynthesis; 1,4-dihydroxy-2-naphthoate from chorismate: step 2/7. Its pathway is quinol/quinone metabolism; menaquinone biosynthesis. Functionally, catalyzes the thiamine diphosphate-dependent decarboxylation of 2-oxoglutarate and the subsequent addition of the resulting succinic semialdehyde-thiamine pyrophosphate anion to isochorismate to yield 2-succinyl-5-enolpyruvyl-6-hydroxy-3-cyclohexene-1-carboxylate (SEPHCHC). The chain is 2-succinyl-5-enolpyruvyl-6-hydroxy-3-cyclohexene-1-carboxylate synthase from Shewanella putrefaciens (strain CN-32 / ATCC BAA-453).